A 206-amino-acid chain; its full sequence is Autophagy-related protein 33 (206 aa).

The next 4 membrane-spanning stretches (helical) occupy residues 13–35 (VSSL…AAPV), 51–71 (VGGA…FGAP), 77–97 (PYLL…AVVA), and 181–201 (AAVL…GLYG).

The protein belongs to the ATG33 family.

The protein resides in the mitochondrion membrane. Its function is as follows. Involved in the selective degradation of mitochondria via autophagy during starvation and at post-log phase. The chain is Autophagy-related protein 33 (ATG33) from Lachancea thermotolerans (strain ATCC 56472 / CBS 6340 / NRRL Y-8284) (Yeast).